The sequence spans 682 residues: Methionine--tRNA ligase (682 aa).

Positions 15–25 match the 'HIGH' region motif; that stretch reads PYANGAIHLGH. 4 residues coordinate Zn(2+): cysteine 146, cysteine 149, cysteine 159, and cysteine 162. A 'KMSKS' region motif is present at residues 331 to 335; it reads KMSKS. Residue lysine 334 coordinates ATP. A tRNA-binding domain is found at 580–682; the sequence is DFAKLDMRVA…SGVTAGMQVK (103 aa).

Belongs to the class-I aminoacyl-tRNA synthetase family. MetG type 1 subfamily. Homodimer. Requires Zn(2+) as cofactor.

It is found in the cytoplasm. It catalyses the reaction tRNA(Met) + L-methionine + ATP = L-methionyl-tRNA(Met) + AMP + diphosphate. Its function is as follows. Is required not only for elongation of protein synthesis but also for the initiation of all mRNA translation through initiator tRNA(fMet) aminoacylation. The chain is Methionine--tRNA ligase from Haemophilus influenzae (strain ATCC 51907 / DSM 11121 / KW20 / Rd).